Reading from the N-terminus, the 784-residue chain is Transcription factor E4F1 (784 aa).

The segment at 41–85 is required for ubiquitin ligase activity; the sequence is GFLGLPAPFSEEDEDDVHRCGRCQAEFTALEDFVQHKIQKACQRA. Phosphoserine is present on serine 50. Residues 184–263 form a mediates dimerization, DNA-binding, transcription repression of CCNA2 and interaction with HMGA2 region; sequence LLVNKDGRYV…GKSFRESGAL (80 aa). C2H2-type zinc fingers lie at residues 192–214 and 220–242; these read YVCA…MVTH and HECK…HRRH. The C2H2-type 3; degenerate zinc finger occupies 248–272; the sequence is YKCSKCGKSFRESGALTRHLKSLTP. Residues 369 to 566 are mediates interaction with CDKN2A; it reads NLLHQAMQNS…REKGSLVRHV (198 aa). 5 C2H2-type zinc fingers span residues 435 to 457, 463 to 485, 491 to 513, 519 to 541, and 547 to 569; these read HPCP…KRGH, FACA…QEVH, FRCG…RRVH, YPCP…FRTH, and HVCQ…VRHH. Residues 435–599 are interaction with BMI1; that stretch reads HPCPQCSETF…LNRHLRTKGG (165 aa). The segment at 521–580 is mediates interaction with TP53; that stretch reads CPKCGKRYKTKNAQQVHFRTHLEEKPHVCQFCSRGFREKGSLVRHVRHHTGEKPFKCYKC. The C2H2-type 9; degenerate zinc-finger motif lies at 575–597; that stretch reads FKCYKCGRGFAEHGTLNRHLRTK. The tract at residues 575-597 is mediates interaction with RASSF1; sequence FKCYKCGRGFAEHGTLNRHLRTK.

Homodimer; binds DNA as a dimer. Forms a complex with CDKN2A and TP53. Interactions with TP53, RB1, ANP32A, BMI1 and FHL2 regulate E4F1 activity. Interacts with HDAC1, HMGA2 and RASSF1. As to quaternary structure, (Microbial infection) Interacts with HBV protein X. Proteolytic cleavage produces a 50 kDa N-terminal peptide (p50E4F) which has a DNA-binding activity and activates transcription in presence of the adenoviral E1A protein. The major full-length protein (p120E4F) functions as a repressor of transcription. Post-translationally, phosphorylated; p120E4F and p50E4F are both phosphorylated. Phosphorylation is cell cycle-dependent and differentially regulates DNA-binding activity and function of both forms. In terms of processing, may be sumoylated by UBE2I upon interaction with CDKN2A. In terms of tissue distribution, ubiquitously expressed.

The protein localises to the nucleus. It is found in the nucleoplasm. The protein resides in the cytoplasm. It carries out the reaction S-ubiquitinyl-[E2 ubiquitin-conjugating enzyme]-L-cysteine + [acceptor protein]-L-lysine = [E2 ubiquitin-conjugating enzyme]-L-cysteine + N(6)-ubiquitinyl-[acceptor protein]-L-lysine.. Its pathway is protein modification; protein ubiquitination. Its function is as follows. May function as a transcriptional repressor. May also function as a ubiquitin ligase mediating ubiquitination of chromatin-associated TP53. Functions in cell survival and proliferation through control of the cell cycle. Functions in the p53 and pRB tumor suppressor pathways and regulates the cyclin CCNA2 transcription. In terms of biological role, identified as a cellular target of the adenoviral oncoprotein E1A, it is required for both transcriptional activation and repression of viral genes. This chain is Transcription factor E4F1 (E4F1), found in Homo sapiens (Human).